The chain runs to 942 residues: Protein ZDS2 (942 aa).

The interval 1 to 28 (MVLMEDMQNKDGHNTVENSSGGTDSNNN) is disordered. Residues 15–28 (TVENSSGGTDSNNN) are compositionally biased toward polar residues. Residue serine 50 is modified to Phosphoserine. Disordered regions lie at residues 91 to 142 (SRNS…DDSI), 483 to 541 (SQES…NSSN), 617 to 654 (VVSS…KNSL), 682 to 728 (VKKE…DIDT), and 788 to 817 (SRDT…ISTL). Basic and acidic residues predominate over residues 99 to 122 (SSKESLQESLHEENIIRSEQKEEQ). Residues 123-134 (GSEDNDAYEEGD) are compositionally biased toward acidic residues. Composition is skewed to low complexity over residues 483-497 (SQES…SNNS), 518-541 (SSSE…NSSN), and 617-627 (VVSSSESQPSK). The span at 682-704 (VKKELKKKASHSSLSKFRKSPKK) shows a compositional bias: basic residues. The span at 807–816 (TSPTAPQIST) shows a compositional bias: polar residues.

The protein to yeast ZDS1/NRC1/CES1. As to quaternary structure, interacts with SKG6.

Functionally, acts as a negative regulator of polarized growth via an alternative mechanism to ZDS1. In heat-stressed cells appears to play a role in localizing BCY1 to the cytoplasm. Seems to interact with, and down-regulate, CDC42. Also acts as a suppressor of PKC1. May act as an integration point for distinct signaling pathways helping to maintain a balance among these different pathways. The chain is Protein ZDS2 (ZDS2) from Saccharomyces cerevisiae (strain ATCC 204508 / S288c) (Baker's yeast).